We begin with the raw amino-acid sequence, 206 residues long: Glycerol-3-phosphate acyltransferase (206 aa).

Helical transmembrane passes span 3–23 (LGWL…SYII), 51–71 (VGPA…AVVV), 83–103 (FAAA…YYGF), 113–133 (IGVL…IAIG), and 162–182 (WFGY…LSMW).

Belongs to the PlsY family. Probably interacts with PlsX.

It is found in the cell membrane. It catalyses the reaction an acyl phosphate + sn-glycerol 3-phosphate = a 1-acyl-sn-glycero-3-phosphate + phosphate. It participates in lipid metabolism; phospholipid metabolism. Functionally, catalyzes the transfer of an acyl group from acyl-phosphate (acyl-PO(4)) to glycerol-3-phosphate (G3P) to form lysophosphatidic acid (LPA). This enzyme utilizes acyl-phosphate as fatty acyl donor, but not acyl-CoA or acyl-ACP. In Halalkalibacterium halodurans (strain ATCC BAA-125 / DSM 18197 / FERM 7344 / JCM 9153 / C-125) (Bacillus halodurans), this protein is Glycerol-3-phosphate acyltransferase.